Here is a 594-residue protein sequence, read N- to C-terminus: MADLLSSLKNLPNSSGVYQYFDKNRQLLYIGKAKNLKKRIKSYFSIRNNEITPNHRASLRVQMMVKQIAFLETILVENEQDALILENSLIKQLKPKYNILLRDDKTYPYIYMDFSTDFPIPLITRKILKQPGVKYFGPFTSGAKDILDSLYELLPLVQKKNCIKDKKACMFYQIERCKAPCEDKITKEEYLKIAKKCLEMIENKDRLIKELELKMERLSSKLRFEEALIYRDRIAKIQKIAPFTCMDLAKLYDLDIFAFYGTSNKAVLVKMFMRGGKIISSAFEKIHSLNGFDTDEAMKQAIINHYQSHLPLIPEQILLNACSNETLKELQEFISHQYSKKIALSIPKKGDKLALIEIAMKNAQEIFSQEKTSNEDLILEEARSLFKLECMPYRVEIFDTSHHANSQCVGGMVVYENNAFQKNSYRLYHLKGSDEYAQMSELLTRRALDFAKEPPPNLWVIDGGRAQLNIALEILKSSGSFVEVIAISKEKRDSKAYRSKGGAKDIIHTPSDTFKLLPSDKRLQWVQKLRDESHRYAINFHRSTKLKNLKQIALLKEKGIGEASVKKLLDYFGSFEAIEKASEQEKNAVLKKRN.

The 87-residue stretch at N13 to I99 folds into the GIY-YIG domain. The 36-residue stretch at D205 to I240 folds into the UVR domain.

The protein belongs to the UvrC family. Interacts with UvrB in an incision complex.

The protein resides in the cytoplasm. The UvrABC repair system catalyzes the recognition and processing of DNA lesions. UvrC both incises the 5' and 3' sides of the lesion. The N-terminal half is responsible for the 3' incision and the C-terminal half is responsible for the 5' incision. This chain is UvrABC system protein C, found in Helicobacter pylori (strain P12).